A 239-amino-acid polypeptide reads, in one-letter code: MSIEWLSEKLSEQGIELSNTQKEQFQKYYKLLVEWNKKMNLTSITDEHDVYLKHFYDSIAPSFYYDFNGQLSLCDIGAGAGFPSIPLKIVYPELKVTIVDSLNKRIQFLNHLAAELGLEDVSFVHDRAEIYGKGVYRESYDIVTARAVARLTVLSELCLPLVKKGGQFLALKSSKGEEELQEATFAINILGGNVKETHTFELPENAGERQMIIIDKRRQTSKKYPRKPGTPNKSPLVES.

Residues glycine 77, phenylalanine 82, 128 to 129 (AE), and arginine 146 each bind S-adenosyl-L-methionine. Residues 216-239 (KRRQTSKKYPRKPGTPNKSPLVES) form a disordered region.

The protein belongs to the methyltransferase superfamily. RNA methyltransferase RsmG family.

Its subcellular location is the cytoplasm. Its function is as follows. Specifically methylates the N7 position of guanine in position 535 of 16S rRNA. In Staphylococcus epidermidis (strain ATCC 35984 / DSM 28319 / BCRC 17069 / CCUG 31568 / BM 3577 / RP62A), this protein is Ribosomal RNA small subunit methyltransferase G.